The following is a 442-amino-acid chain: Protein translocase subunit SecY (442 aa).

The next 10 helical transmembrane spans lie at 24-44, 76-96, 125-145, 149-169, 178-198, 212-232, 269-289, 312-332, 363-383, and 385-405; these read FLFL…PGIN, IFAL…LMTA, VLAL…GVAF, FGFY…MMWL, VGNG…PRAI, IFAL…VVFI, VIPA…GSWF, NILL…ALMF, GVLT…CLLP, and FLVV…LIVV.

The protein belongs to the SecY/SEC61-alpha family. As to quaternary structure, component of the Sec protein translocase complex. Heterotrimer consisting of SecY, SecE and SecG subunits. The heterotrimers can form oligomers, although 1 heterotrimer is thought to be able to translocate proteins. Interacts with the ribosome. Interacts with SecDF, and other proteins may be involved. Interacts with SecA.

It localises to the cell inner membrane. The central subunit of the protein translocation channel SecYEG. Consists of two halves formed by TMs 1-5 and 6-10. These two domains form a lateral gate at the front which open onto the bilayer between TMs 2 and 7, and are clamped together by SecE at the back. The channel is closed by both a pore ring composed of hydrophobic SecY resides and a short helix (helix 2A) on the extracellular side of the membrane which forms a plug. The plug probably moves laterally to allow the channel to open. The ring and the pore may move independently. The polypeptide is Protein translocase subunit SecY (Pseudomonas aeruginosa (strain ATCC 15692 / DSM 22644 / CIP 104116 / JCM 14847 / LMG 12228 / 1C / PRS 101 / PAO1)).